The sequence spans 55 residues: Lantibiotic epilancin (55 aa).

Residues 1–24 constitute a propeptide, cleaved by ElxP; it reads MNNSLFDLNLNKGVETQKSDLSPQ. Residue S25 is modified to D-lactate; by the dehydratase ElxB and the dehydrogenase ElxO. Residue S27 is modified to 2,3-didehydroalanine (Ser); by the dehydratase ElxB. The residue at position 31 (T31) is a 2,3-didehydrobutyrine; by the dehydratase ElxB. At S32 the chain carries 2,3-didehydroalanine (Ser); by the dehydratase ElxB. The lanthionine (Ser-Cys); by the dehydratase ElxB and the cyclase ElxC cross-link spans 36 to 40; that stretch reads SKKYC. Cross-links (beta-methyllanthionine (Thr-Cys); by the dehydratase ElxB and the cyclase ElxC) lie at residues 44-47 and 46-49; these read TLTC and TCGC. The residue at position 52 (T52) is a 2,3-didehydrobutyrine; by the dehydratase ElxB.

Belongs to the type A lantibiotic family. In terms of processing, maturation of this lantibiotic involves the enzymatic conversion of Thr, and Ser into dehydrated AA by ElxB and the formation of thioether bonds with cysteine by the cyclase ElxC. The next steps are cleavage of the leader peptide by ElxP and membrane translocation by ElxT. The leader peptide may be removed before membrane translocation, in contrast to other lantibiotics for which the cleavage occur after translocation. This is suggested by the probable cytoplasmic localization of the serine protease ElxP that cleaves the leader peptide. It is not established whether the 2,3-didehydrobutyrine is the E- or Z-isomer. Post-translationally, the N-terminal D-lactate is probably produced by dehydration of Ser-25 by ElxB, followed by proteolytic removal of the leader peptide by the serine protease ElxP and hydrolysis of the resulting new N-terminal dehydroalanine. This hydrolysis may occur spontaneously. The pyruvate group thus formed is reduced to D-lactate by the NADPH-dependent oxidoreductase ElxO. This N-terminal D-lactate protects the lantibiotic against degradation against aminopeptidase.

In terms of biological role, lanthionine-containing peptide antibiotic (lantibiotic) active on Gram-positive bacteria such as staphylococci, enterococci and streptococci. The bactericidal activity of lantibiotics is based on depolarization of energized bacterial cytoplasmic membranes, initiated by the formation of aqueous transmembrane pores. The sequence is that of Lantibiotic epilancin (elkA) from Staphylococcus epidermidis.